Reading from the N-terminus, the 236-residue chain is Pyridoxal 5'-phosphate synthase subunit PdxT (236 aa).

61–63 (GES) contacts L-glutamine. Residue cysteine 93 is the Nucleophile of the active site. L-glutamine-binding positions include arginine 127 and 163-164 (IR). Residues histidine 215 and glutamate 217 each act as charge relay system in the active site.

This sequence belongs to the glutaminase PdxT/SNO family. As to quaternary structure, in the presence of PdxS, forms a dodecamer of heterodimers. Only shows activity in the heterodimer.

It carries out the reaction aldehydo-D-ribose 5-phosphate + D-glyceraldehyde 3-phosphate + L-glutamine = pyridoxal 5'-phosphate + L-glutamate + phosphate + 3 H2O + H(+). The enzyme catalyses L-glutamine + H2O = L-glutamate + NH4(+). Its pathway is cofactor biosynthesis; pyridoxal 5'-phosphate biosynthesis. Its function is as follows. Catalyzes the hydrolysis of glutamine to glutamate and ammonia as part of the biosynthesis of pyridoxal 5'-phosphate. The resulting ammonia molecule is channeled to the active site of PdxS. The sequence is that of Pyridoxal 5'-phosphate synthase subunit PdxT from Arthrobacter sp. (strain FB24).